A 65-amino-acid chain; its full sequence is Large ribosomal subunit protein bL35 (65 aa).

The protein belongs to the bacterial ribosomal protein bL35 family.

The chain is Large ribosomal subunit protein bL35 from Desulfitobacterium hafniense (strain DSM 10664 / DCB-2).